We begin with the raw amino-acid sequence, 398 residues long: Lymphocyte transmembrane adapter 1 (398 aa).

Over 1-37 (MDGVTPTLSTIRGRTLESSTLHVTPRSLDRNKDQITN) the chain is Extracellular. A helical; Signal-anchor for type III membrane protein membrane pass occupies residues 38–58 (IFSGFAGLLAILLVVAVFCIL). At 59 to 398 (WNWNKRKKRQ…GPGTQLLPDE (340 aa)) the chain is on the cytoplasmic side. The residue at position 193 (Y193) is a Phosphotyrosine. The tract at residues 228–261 (TEERDEGCGDAGDCTSLYSPGAEDSDSLSNGEGS) is disordered. Residues Y268 and Y294 each carry the phosphotyrosine modification. The tract at residues 298–330 (PAADPSGSQQQAEKDVPSSNIGHVEDKTDDPGT) is disordered. The span at 303 to 318 (SGSQQQAEKDVPSSNI) shows a compositional bias: polar residues. A compositionally biased stretch (basic and acidic residues) spans 320 to 329 (HVEDKTDDPG). Phosphotyrosine is present on residues Y345 and Y373. The tract at residues 347–398 (DFQPFTQSEDSQMKHREEMSNEDSSDYENVLTAKLGGRDSEQGPGTQLLPDE) is disordered.

When phosphorylated, interacts with GRB2, PIK3R1 and GRAP2. Post-translationally, phosphorylated on tyrosines by Syk, Lck or ZAP70 upon TCR or BCR activation; which leads to the recruitment of GRB2, PIK3R1 and GRAP2. Expressed in spleen, thymus, and peripheral blood leukocytes. Expressed in several B-, T-, NK and monocyte cell lines.

Its subcellular location is the cell membrane. Its function is as follows. Negatively regulates TCR (T-cell antigen receptor)-mediated signaling in T-cells and BCR (B-cell antigen receptor)-mediated signaling in B-cells. The chain is Lymphocyte transmembrane adapter 1 (LAX1) from Homo sapiens (Human).